The primary structure comprises 42 residues: Photosystem II reaction center protein J (42 aa).

The chain crosses the membrane as a helical span at residues 10 to 30; that stretch reads IPLWLVGTVAGTAALTLVAVF.

The protein belongs to the PsbJ family. In terms of assembly, PSII is composed of 1 copy each of membrane proteins PsbA, PsbB, PsbC, PsbD, PsbE, PsbF, PsbH, PsbI, PsbJ, PsbK, PsbL, PsbM, PsbT, PsbX, PsbY, PsbZ, Psb30/Ycf12, at least 3 peripheral proteins of the oxygen-evolving complex and a large number of cofactors. It forms dimeric complexes.

The protein resides in the plastid. It localises to the chloroplast thylakoid membrane. Its function is as follows. One of the components of the core complex of photosystem II (PSII). PSII is a light-driven water:plastoquinone oxidoreductase that uses light energy to abstract electrons from H(2)O, generating O(2) and a proton gradient subsequently used for ATP formation. It consists of a core antenna complex that captures photons, and an electron transfer chain that converts photonic excitation into a charge separation. This chain is Photosystem II reaction center protein J, found in Chlorella vulgaris (Green alga).